Here is a 303-residue protein sequence, read N- to C-terminus: Crk-like protein (303 aa).

The SH2 domain occupies 14-102 (WYMGPVSRQE…LDTTTLIEPA (89 aa)). Residues 123–183 (DNLEYVRTLY…PVPYVEKLVR (61 aa)) enclose the SH3 1 domain. Tyr-127 and Tyr-207 each carry phosphotyrosine. Residues 184-234 (SSPHGKHGNRNSNSYGIPEPAHAYAQPQTTTPLPAVSGSPGAAITPLPSTQ) are disordered. The 62-residue stretch at 235 to 296 (NGPVFAKAIQ…PFTHVKIFDP (62 aa)) folds into the SH3 2 domain.

The protein belongs to the CRK family. Interacts with tyrosine-phosphorylated EPOR and INPP5D/SHIP1. Interacts with DOCK2 and DOCK5 via its first SH3 domain. Interacts with phosphorylated CBLB and IRS4. Interacts with BCAR1/CAS and NEDD9/HEF1.

Functionally, may mediate the transduction of intracellular signals. The chain is Crk-like protein (CRKL) from Homo sapiens (Human).